A 635-amino-acid chain; its full sequence is Threonine--tRNA ligase (635 aa).

Residues 1–61 (MVSIRLPDGS…DRDASLAIVT (61 aa)) form the TGS domain. Positions 242-533 (DHRKLGKQLD…LIEHHAGAMP (292 aa)) are catalytic. The Zn(2+) site is built by Cys-333, His-384, and His-510.

This sequence belongs to the class-II aminoacyl-tRNA synthetase family. Homodimer. Requires Zn(2+) as cofactor.

The protein localises to the cytoplasm. The enzyme catalyses tRNA(Thr) + L-threonine + ATP = L-threonyl-tRNA(Thr) + AMP + diphosphate + H(+). In terms of biological role, catalyzes the attachment of threonine to tRNA(Thr) in a two-step reaction: L-threonine is first activated by ATP to form Thr-AMP and then transferred to the acceptor end of tRNA(Thr). Also edits incorrectly charged L-seryl-tRNA(Thr). This chain is Threonine--tRNA ligase, found in Burkholderia lata (strain ATCC 17760 / DSM 23089 / LMG 22485 / NCIMB 9086 / R18194 / 383).